The primary structure comprises 881 residues: Cell wall protein PRY3 (881 aa).

An N-terminal signal peptide occupies residues 1 to 18; the sequence is MLEFPISVLLGCLVAVKA. Residues 30-144 form the SCP domain; sequence LNEHNKFRAL…TWNNYIVCSY (115 aa). Residue Asn-101 is glycosylated (N-linked (GlcNAc...) asparagine). Residues 262–313 are disordered; the sequence is VVSSDATSSTTTTSSVATSSSTTSSDPTSSTAAASSSDPASSSAAASSSAST. Asn-360 is a glycosylation site (N-linked (GlcNAc...) asparagine). Disordered regions lie at residues 381–400 and 453–494; these read AADD…VSEH and VSST…NSAA. Residues 386–400 show a composition bias toward polar residues; it reads QGSTSKEATSSVSEH. Residues Asn-488, Asn-535, Asn-547, and Asn-569 are each glycosylated (N-linked (GlcNAc...) asparagine). The interval 579–611 is disordered; it reads IDPTLDPTDNSASPTDNAKHTSTYGSSSTGASL. The segment covering 585–594 has biased composition (polar residues); that stretch reads PTDNSASPTD. Over residues 599-611 the composition is skewed to low complexity; that stretch reads TSTYGSSSTGASL. N-linked (GlcNAc...) asparagine glycosylation occurs at Asn-625. Disordered stretches follow at residues 758–788 and 800–830; these read LASD…TTTT and PSST…MHQP. Low complexity-rich tracts occupy residues 776-788 and 808-820; these read STSN…TTTT and RTTT…STTS. A compositionally biased stretch (polar residues) spans 821-830; sequence QQDGSAMHQP. A lipid anchor (GPI-anchor amidated glycine) is attached at Gly-853. Positions 854 to 881 are cleaved as a propeptide — removed in mature form; it reads AATPLSIFQCNSLAGTIAAFVVAVLFAF.

This sequence belongs to the CRISP family. In terms of processing, the GPI-anchor is attached to the protein in the endoplasmic reticulum and serves to target the protein to the cell surface. There, the glucosamine-inositol phospholipid moiety is cleaved off and the GPI-modified mannoprotein is covalently attached via its lipidless GPI glycan remnant to the 1,6-beta-glucan of the outer cell wall layer.

The protein resides in the secreted. It localises to the cell wall. Its subcellular location is the membrane. The full-length isoform (isoform Long) is a daughter cell-specific cell wall protein required for efficient export of lipids such as acetylated sterols. Acts in detoxification of hydrophobic compounds. Involved in tolerance to organic solvents such as dimethyl sulfoxide (DMSO). Also plays a role as an inhibitor of mating. STE12 is utilized as a repressor of full-length PRY3 transcription, ensuring efficient mating. In terms of biological role, there is no evidence that production of the short PRY3 transcript (isoform Short) is anything more than an adventitious by-product of the mechanism responsible for the repression of the full-length transcript. Moreover, no disadvantage is detectable for cells unable to make the short transcript. The chain is Cell wall protein PRY3 (PRY3) from Saccharomyces cerevisiae (strain ATCC 204508 / S288c) (Baker's yeast).